The chain runs to 213 residues: Protein-L-isoaspartate O-methyltransferase 1 (213 aa).

Ser64 is an active-site residue.

It belongs to the methyltransferase superfamily. L-isoaspartyl/D-aspartyl protein methyltransferase family.

It localises to the cytoplasm. It carries out the reaction [protein]-L-isoaspartate + S-adenosyl-L-methionine = [protein]-L-isoaspartate alpha-methyl ester + S-adenosyl-L-homocysteine. Catalyzes the methyl esterification of L-isoaspartyl residues in peptides and proteins that result from spontaneous decomposition of normal L-aspartyl and L-asparaginyl residues. It plays a role in the repair and/or degradation of damaged proteins. This Nitrosococcus oceani (strain ATCC 19707 / BCRC 17464 / JCM 30415 / NCIMB 11848 / C-107) protein is Protein-L-isoaspartate O-methyltransferase 1.